We begin with the raw amino-acid sequence, 362 residues long: 3-dehydroquinate synthase (362 aa).

NAD(+) is bound by residues 71–76 (DGEQYK), 105–109 (GVIGD), 129–130 (TT), Lys142, Lys151, and 169–172 (CLKT). Residues Glu184, His247, and His264 each coordinate Zn(2+).

It belongs to the sugar phosphate cyclases superfamily. Dehydroquinate synthase family. Co(2+) serves as cofactor. The cofactor is Zn(2+). Requires NAD(+) as cofactor.

Its subcellular location is the cytoplasm. It catalyses the reaction 7-phospho-2-dehydro-3-deoxy-D-arabino-heptonate = 3-dehydroquinate + phosphate. Its pathway is metabolic intermediate biosynthesis; chorismate biosynthesis; chorismate from D-erythrose 4-phosphate and phosphoenolpyruvate: step 2/7. Its function is as follows. Catalyzes the conversion of 3-deoxy-D-arabino-heptulosonate 7-phosphate (DAHP) to dehydroquinate (DHQ). This Salmonella schwarzengrund (strain CVM19633) protein is 3-dehydroquinate synthase.